The chain runs to 300 residues: Pantothenate synthetase (300 aa).

Residue 30–37 (MGYLHEGH) participates in ATP binding. His37 serves as the catalytic Proton donor. Residue Gln61 coordinates (R)-pantoate. Residue Gln61 coordinates beta-alanine. 147-150 (GMKD) contributes to the ATP binding site. A (R)-pantoate-binding site is contributed by Gln153. ATP-binding positions include Val176 and 184–187 (KSSR).

It belongs to the pantothenate synthetase family. In terms of assembly, homodimer.

Its subcellular location is the cytoplasm. The catalysed reaction is (R)-pantoate + beta-alanine + ATP = (R)-pantothenate + AMP + diphosphate + H(+). It functions in the pathway cofactor biosynthesis; (R)-pantothenate biosynthesis; (R)-pantothenate from (R)-pantoate and beta-alanine: step 1/1. Its function is as follows. Catalyzes the condensation of pantoate with beta-alanine in an ATP-dependent reaction via a pantoyl-adenylate intermediate. The sequence is that of Pantothenate synthetase from Geobacillus kaustophilus (strain HTA426).